Reading from the N-terminus, the 152-residue chain is Ribosome maturation factor RimP (152 aa).

This sequence belongs to the RimP family.

The protein localises to the cytoplasm. Functionally, required for maturation of 30S ribosomal subunits. The chain is Ribosome maturation factor RimP from Alteromonas mediterranea (strain DSM 17117 / CIP 110805 / LMG 28347 / Deep ecotype).